The primary structure comprises 308 residues: tRNA dimethylallyltransferase (308 aa).

Position 14 to 21 (14 to 21 (GPTASGKT)) interacts with ATP. Substrate is bound at residue 16-21 (TASGKT). Interaction with substrate tRNA regions lie at residues 39–42 (DSAL), 163–167 (QRLSR), and 244–249 (RCVGYR).

The protein belongs to the IPP transferase family. Monomer. The cofactor is Mg(2+).

The catalysed reaction is adenosine(37) in tRNA + dimethylallyl diphosphate = N(6)-dimethylallyladenosine(37) in tRNA + diphosphate. Functionally, catalyzes the transfer of a dimethylallyl group onto the adenine at position 37 in tRNAs that read codons beginning with uridine, leading to the formation of N6-(dimethylallyl)adenosine (i(6)A). This chain is tRNA dimethylallyltransferase, found in Shewanella baltica (strain OS223).